A 399-amino-acid polypeptide reads, in one-letter code: Phosphoglycerate kinase (399 aa).

Residues 24–26 (DLN), Arg41, 64–67 (HLGR), Arg123, and Arg160 each bind substrate. ATP contacts are provided by residues Lys210, Gly298, Glu329, and 355–358 (GGDS).

This sequence belongs to the phosphoglycerate kinase family. As to quaternary structure, monomer.

The protein localises to the cytoplasm. The catalysed reaction is (2R)-3-phosphoglycerate + ATP = (2R)-3-phospho-glyceroyl phosphate + ADP. It participates in carbohydrate degradation; glycolysis; pyruvate from D-glyceraldehyde 3-phosphate: step 2/5. The chain is Phosphoglycerate kinase from Salinispora tropica (strain ATCC BAA-916 / DSM 44818 / JCM 13857 / NBRC 105044 / CNB-440).